The primary structure comprises 261 residues: uncharacterized protein (261 aa).

Glu-46 is an active-site residue.

The protein belongs to the PhzF family.

This is an uncharacterized protein from Pseudomonas aeruginosa (strain ATCC 15692 / DSM 22644 / CIP 104116 / JCM 14847 / LMG 12228 / 1C / PRS 101 / PAO1).